The chain runs to 118 residues: Myotrophin (118 aa).

ANK repeat units follow at residues 1–30 (MGDK…DVNR), 34–65 (GGRK…NAAD), and 67–98 (HGIT…TVKG).

The protein belongs to the myotrophin family.

It localises to the cytoplasm. The protein resides in the nucleus. It is found in the perinuclear region. Functionally, regulates NF-kappa-B transcription factor activity. Promotes growth of cardiomyocytes, but not cardiomyocyte proliferation. Promotes cardiac muscle hypertrophy. Plays a role in the regulation of the growth of actin filaments. Inhibits the activity of the F-actin-capping protein complex. This Xenopus tropicalis (Western clawed frog) protein is Myotrophin (mtpn).